We begin with the raw amino-acid sequence, 271 residues long: MKDRIERAAAFIKQNLPESPKIGLILGSGLGILADEIENPVKLKYEDIPEFPVSTVEGHAGQLVLGTLEGVSVIAMQGRFHFYEGYSMEKVTFPVRVMKALGVEALIVTNAAGGVNTEFRAGDLMIITDHINFMGTNPLIGPNEADFGARFPDMSSAYDKDLSSLAEKIAKDLNIPIQKGVYTAVTGPSYETPAEVRFLRTMGSDAVGMSTVPEVIVANHAGMRVLGISCISNAAAGILDQPLSHDEVMEVTEKVKAGFLKLVKAIVAQYE.

Phosphate-binding positions include Ser-28, His-59, Arg-79–His-81, and Ala-111. Ser-28 is subject to Phosphoserine. Residue Glu-191 coordinates a purine D-ribonucleoside. Residue Ser-210 coordinates phosphate. A purine D-ribonucleoside is bound at residue Asn-233.

It belongs to the PNP/MTAP phosphorylase family. Homotrimer.

The catalysed reaction is a purine 2'-deoxy-D-ribonucleoside + phosphate = a purine nucleobase + 2-deoxy-alpha-D-ribose 1-phosphate. It participates in purine metabolism; purine nucleoside salvage. In terms of biological role, the purine nucleoside phosphorylases catalyze the phosphorolytic breakdown of the N-glycosidic bond in the beta-(deoxy)ribonucleoside molecules, with the formation of the corresponding free purine bases and pentose-1-phosphate. Cleaves guanosine, inosine, 2'-deoxyguanosine and 2'-deoxyinosine. This Bacillus subtilis (strain 168) protein is Purine nucleoside phosphorylase 1 (punA).